We begin with the raw amino-acid sequence, 3375 residues long: MKRSSTVLAALLALLLVATNDAARHRKYRQTYQDIDSDDDDTSDVQITVFPSEKEVRDGRDVSFECRARTSDNSVYPTVRWARVGGPLPSSAHDSGGRLTINPVQLSDAGTYICVSDYNGNTVEARATLSVVSYGPQEVSNGLRQAGQCMADEKACGNNECVKNDYVCDGEPDCRDRSDEANCPAISRTCEPNEFKCNNNKCVQKMWLCDGDDDCGDNSDELNCNAKPSSSDCKPTEFQCHDRRQCVPSSFHCDGTNDCHDGSDEVGCVQPTVVDPPQTNLQVPRGTTFSLTCKAVAVPEPYINWRLNWGPVCEPPRCLQTSEGGYGTLTIHDAQPVDQGAYTCEAINVKGRVLATPDCIVRVVDDPRPQPPQPPTAPPQRASCDTRGAVTPYPNNYGTCECKSQVTGPNCDQCKPGAFHLSEKSPEGCLKCFCFGVSNDCRSSGHYRTKDRLMFAGDAEGVTISDIEERTIDRNTPFSFFKTGYLTFDGTTDGVAKYWRLPQRFLGDKVTAYGGKMEFEIEFSGSGHHSSEPMVVLKGNQNILVHRVRNQEHVLRSDSPVRITVETYETNYEQLNGAAATREDLLMVLADLDAFLIRATHVAHQTSTSLGDVSWEIAVDRYTPDGLALEVEQCVCPPGYLGTSCEDCAPGYERSGYGPYLGTCVPIQPRHQQCGPGAVAPTAPAQGQCQCKASVIGPNCDRCAPNSFGLAPTNPQGCIPCFCSGVTQQCSASSYRRTSVSIDYARGDRDQLELTTSDSRQPYSPQTRAELSGQAIEFRSFEEARGQTLYWKLPEKFLGDKVTSYGGTLEYTFKFSGNGNSDQSADVILRGNDIALQYKHREPFYADRENKVQIKIIETSWQRVDGQQATREHLLMTLADLDTLLIKSTYNDDCTDSQLLSANLEFAEPYGQGLTAAEVEQCICPPGYVGTSCEDCAPGYSRTGGGLYLGLCEKCECNGHASQCDKEYGYCLDCQHNTEGDQCERCKPGFVGDARRGTPNDCQPEATRAPCHCNNHSPRGCDSFGRCLLCEHNTEGTHCERCKKGYYGDATKGSPYDCTPCPCPGASDCYLDNEGQVACRICPAGLQGRLCNECAPGYTRSNKPAGRVCEPIGQVTNEDITFVQKPHEVLRVRIMEPKRQIALPGDRVHWICQVTGYTTEKIHVEWTKVGEMSLPPNAKAYDGYLVLKGVEAENAGQYRCTATTITQYATDDALLTISKRISGRPPQPVIDPPHLVVNEGEPAAFRCWVPGIPDCQITWHREQLGGPLPHGVYQTGNALKIPQSQLHHAGRYICSAANQYGTGQSPPAVLEVKKPVIPPKVDPIRQTVDRDQPARFKCWVPGNSNVQLRWSRPGGAPLPSGVQEQQGILHIPRASDQEVGQYVCTATDPSDNTPLQSEPVQLNIRDPAPPQRGAAPQIDPPNQTVNVNDPAQFRCWVPGQPRAQLKWSRKDGRPLPNGILERDGFLRIDKSQLHDAGEYECTSTEPDGSTQLSPPARLNVNQPQAIQPQVDPPVQTVNEGEPSRIRCWVPGHPNIQLQFVKRGRRPLPAHARFSQGNLEIPRTLKSDEDEYICIATDPTTNRPVESNPARVIVKSPIRPIIDPAEQTVPEGSPFKIRCYVPGHPSVQLTFRRVSGQLNEDADENNGLLAVQRAELTDEGDYICTARDPDTGAPIDSTPATVHVTNAAAPPQVEARPPQHPVITPQTQTIPEGDPARIQCTVPGNPSAAQHLSFERVDGKGLPFGSSDDRGVLTIPSTQLQDAGEYVCLYSPENSPPVKTNPSTLNVTPEGTPPRPVATPPLLSVAPGSPARFNCVAHSDTPARIRWGFREENGPLPEHVNQDGDDIVISEAGDRNVGEYVCSATNDFGTGVADPVRLEVTEDQEPPTAVVEPRTWNGKPGERHQFRCITTGSPTPKITWTGPNGSPLPHDVTPLEPNILDFSNGRSELNGDYTCTASNPIGEASDHGNVNIGPSLTVKTNPPGPKLIVTVGEPLQVKCEAFGAPGDPEPEVEWLHDPGPERGDLPDDFKPVTISEQFIRHPNVGLGNAGVYTCKGSSAHATATKNIYIEVVEPSRIATVSILGGSSQWFDQGEKGELICTATGSSLVDRLEWEKVDDQLPTDVEEHNEPGLLHFPSFKNSYAGEYRCNGYRNNEIIASAAVHVHSSANADDEPKVEIEPPRVRVVSQGDNIVLKCSVQGAENGEHFKWALLRGGSLVRQLGTEPTLEITKADPSNDFGVYRCNVEDNNGLVIGSAFTAVSVGQQDKSHAQIVKFDDKSDASFTCPIYSVPGSKVDWTYENGDLPSKAVPNGNKIEIKEFDDASAGTYVCKVSFDGNVVEGFVTAQMFVPDTIIQVLLEVSSESPQIGDRAWFDCKVTGDPSAVISWTKEGNDDLPPNAQVTGGRLLFTDLKEDNAGVYRCVAKTKAGPLQTRTVLNVGSGKQDQVTFTVADSLPVVYTVGQPAYLSCIGKTETKPNQSVVWTKEEGDLPSGSRVEQGVLMLPSVHRDDEGSYTCEIVKEENPVFSTVDLQIDDFIPVIDGEPIELPPLSDEEIVNLDIEITLNTANPKGIIFETKRINSGDLLATPYDTIHHEAKITDYGTVLYEFDIGNGRQIVETTNPINPNEWNVIKIKNDKNQVTIQLNDESATIRQHTNPLPSLSTGVNRPVFIGGRHEPTNEANDFRGIISQVVLSGHNVGLGDARIPSSVVKYDACASTNLCLNGANCRNANNHHGFSCECAEEFHGEYCQWRSNSCHDESCNTGICLDNEESWQCVCPLGTTGLRCEEKTEIPQPLGFTSDTSFLAVKRPVKFESIKMKLRPQADSDEHILMYFASDYGSNTKQYTSLSLIANQVVLTVRRPDKEVQKIRSETLEAGELIDVAVRQAGNALVMTVDGNQVSTIETDTLKPGTEIFIGGLPPGLNSPDDVVEQSFQGCVYEILINSQDVDLQNLSSSGDISSCEESQFPVEEDDTTTTTTTEEPEAVIEEPTTEEPTTTEEPITEEPTEEPTTTEEPTTTEEPTTTTEEPTTTTTEEPYHIYETSRDDDPEIIIPVETTTTSTTTTSTTEEPEAEPALVLPTDPVEENDVSDEEEEISTISTVSPDNGLDSDSDYSEGTLPPDSSSEEIVVGDVYSTQEPNNICANSTCGMNGQCVPRNMTHYTCECKLYYDGPTCSLFKPIEHAARFDGDAFIELSSDEFPHLTSEKDEIVAFKFKTEQQNGVLLWQGQRPTVQQMEDYISVGIVNGHLHFSYELGGGAAHLISEERVDDGKEHSVRFERKGREGQMRIDNYREVDGRSTGILAMLNVDGNIFVGGVPDISKATGGLFSNNFVGCIADVELNGVKLDLMATAIDGKNVKPCDEWMHRKRWLYRRRVR.

The first 22 residues, 1 to 22 (MKRSSTVLAALLALLLVATNDA), serve as a signal peptide directing secretion. The Ig-like C2-type 1 domain maps to 45–130 (VQITVFPSEK…NTVEARATLS (86 aa)). 11 disulfide bridges follow: Cys-66-Cys-114, Cys-149-Cys-161, Cys-156-Cys-174, Cys-168-Cys-183, Cys-190-Cys-202, Cys-197-Cys-215, Cys-209-Cys-224, Cys-233-Cys-246, Cys-240-Cys-259, Cys-253-Cys-268, and Cys-293-Cys-344. LDL-receptor class A domains lie at 148–184 (QCMADEKACGNNECVKNDYVCDGEPDCRDRSDEANCP), 189–225 (TCEPNEFKCNNNKCVQKMWLCDGDDDCGDNSDELNCN), and 232–269 (DCKPTEFQCHDRRQCVPSSFHCDGTNDCHDGSDEVGCV). One can recognise an Ig-like C2-type 2 domain in the interval 271–355 (PTVVDPPQTN…AINVKGRVLA (85 aa)). The tract at residues 364–385 (VDDPRPQPPQPPTAPPQRASCD) is disordered. Positions 369–378 (PQPPQPPTAP) are enriched in pro residues. Disulfide bonds link Cys-384/Cys-400, Cys-402/Cys-411, and Cys-414/Cys-429. One can recognise a Laminin EGF-like 1; truncated domain in the interval 384-431 (CDTRGAVTPYPNNYGTCECKSQVTGPNCDQCKPGAFHLSEKSPEGCLK). The Laminin EGF-like 2; first part domain maps to 432-441 (CFCFGVSNDC). The Laminin IV type A 1 domain occupies 450 to 633 (KDRLMFAGDA…PDGLALEVEQ (184 aa)). Intrachain disulfides connect Cys-634/Cys-648, Cys-636/Cys-689, Cys-691/Cys-700, and Cys-703/Cys-718. The Laminin EGF-like 2; second part domain occupies 634 to 666 (CVCPPGYLGTSCEDCAPGYERSGYGPYLGTCVP). The 47-residue stretch at 674-720 (CGPGAVAPTAPAQGQCQCKASVIGPNCDRCAPNSFGLAPTNPQGCIP) folds into the Laminin EGF-like 3; truncated domain. The region spanning 721 to 730 (CFCSGVTQQC) is the Laminin EGF-like 4; first part domain. Positions 740–921 (VSIDYARGDR…QGLTAAEVEQ (182 aa)) constitute a Laminin IV type A 2 domain. Residues 922-954 (CICPPGYVGTSCEDCAPGYSRTGGGLYLGLCEK) enclose the Laminin EGF-like 4; second part domain. Intrachain disulfides connect Cys-955/Cys-964, Cys-957/Cys-971, Cys-974/Cys-983, Cys-986/Cys-1002, Cys-1011/Cys-1021, Cys-1013/Cys-1027, Cys-1030/Cys-1039, Cys-1042/Cys-1058, Cys-1061/Cys-1069, Cys-1063/Cys-1079, Cys-1082/Cys-1091, Cys-1094/Cys-1109, Cys-1152/Cys-1200, Cys-1247/Cys-1294, and Cys-1338/Cys-1384. Laminin EGF-like domains lie at 955 to 1004 (CECN…DCQP), 1011 to 1060 (CHCN…DCTP), and 1061 to 1111 (CPCP…VCEP). 15 consecutive Ig-like C2-type domains span residues 1126–1222 (PHEV…KRIS), 1226–1311 (PQPV…AVLE), 1319–1401 (PKVD…EPVQ), 1410–1499 (PQRG…ARLN), 1503–1585 (PQAI…RPVE), 1588–1680 (PARV…TPAT), 1690–1785 (PQVE…STLN), 1793–1878 (PRPV…VRLE), 1886–1970 (PTAV…GNVN), 1973–2069 (PSLT…IYIE), 2073–2163 (PSRI…AVHV), 2173–2260 (PKVE…TAVS), 2263–2343 (QQDK…GFVT), 2349–2435 (PDTI…RTVL), and 2446–2530 (TFTV…VDLQ). The span at 1388-1400 (DPSDNTPLQSEPV) shows a compositional bias: polar residues. 2 disordered regions span residues 1388-1426 (DPSDNTPLQSEPVQLNIRDPAPPQRGAAPQIDPPNQTVN) and 1478-1497 (EYECTSTEPDGSTQLSPPAR). N-linked (GlcNAc...) asparagine glycosylation occurs at Asn-1422. Intrachain disulfides connect Cys-1435–Cys-1481, Cys-1527–Cys-1573, Cys-1618–Cys-1663, and Cys-1719–Cys-1767. Polar residues predominate over residues 1481–1497 (CTSTEPDGSTQLSPPAR). A disordered region spans residues 1773–1792 (NSPPVKTNPSTLNVTPEGTP). Residues 1776-1788 (PVKTNPSTLNVTP) show a composition bias toward polar residues. 15 disulfides stabilise this stretch: Cys-1814-Cys-1861, Cys-1907-Cys-1954, Cys-1998-Cys-2053, Cys-2099-Cys-2147, Cys-2195-Cys-2242, Cys-2284-Cys-2329, Cys-2374-Cys-2420, Cys-2467-Cys-2514, Cys-2713-Cys-2725, Cys-2719-Cys-2736, Cys-2738-Cys-2747, Cys-2754-Cys-2764, Cys-2759-Cys-2773, Cys-2775-Cys-2784, and Cys-2935-Cys-2960. Positions 1880–1918 (TEDQEPPTAVVEPRTWNGKPGERHQFRCITTGSPTPKIT) are disordered. The segment covering 1907-1918 (CITTGSPTPKIT) has biased composition (polar residues). N-linked (GlcNAc...) asparagine glycosylation occurs at Asn-2476. A Laminin G-like 1 domain is found at 2532–2713 (DDFIPVIDGE…PSSVVKYDAC (182 aa)). Residues 2793–2960 (PLGFTSDTSF…LSSSGDISSC (168 aa)) form the Laminin G-like 2 domain. N-linked (GlcNAc...) asparagine glycosylation occurs at Asn-2950. Low complexity predominate over residues 2952 to 2963 (SSSGDISSCEES). The tract at residues 2952–3124 (SSSGDISSCE…GTLPPDSSSE (173 aa)) is disordered. Composition is skewed to acidic residues over residues 2979-2990 (EEPEAVIEEPTT) and 2999-3010 (PITEEPTEEPTT). Residues 3011–3033 (TEEPTTTEEPTTTTEEPTTTTTE) are compositionally biased toward low complexity. The span at 3034-3044 (EPYHIYETSRD) shows a compositional bias: basic and acidic residues. Low complexity predominate over residues 3049 to 3079 (IIIPVETTTTSTTTTSTTEEPEAEPALVLPT). A compositionally biased stretch (acidic residues) spans 3081–3094 (PVEENDVSDEEEEI). Cystine bridges form between Cys-3141–Cys-3152, Cys-3146–Cys-3162, Cys-3164–Cys-3173, and Cys-3333–Cys-3359. Asn-3143 and Asn-3156 each carry an N-linked (GlcNAc...) asparagine glycan. In terms of domain architecture, Laminin G-like 3 spans 3180-3359 (EHAARFDGDA…AIDGKNVKPC (180 aa)).

In terms of assembly, component of an integrin containing attachment complex, composed of at least pat-2, pat-3, pat-4, pat-6, unc-52, unc-97 and unc-112. As to expression, detected on embryonic and adult body wall muscle cells (at protein level). Found in the basement membrane of all contractile tissues (at protein level). Expressed in gonadal sheath cells and spermatheca.

It is found in the secreted. Its subcellular location is the extracellular space. It localises to the extracellular matrix. The protein resides in the basement membrane. The protein localises to the cytoplasm. It is found in the myofibril. Its subcellular location is the sarcomere. It localises to the m line. Functionally, component of an integrin containing attachment complex, which is required for muscle development and maintenance. Probable structural role in myofilament assembly and/or attachment of the myofilament lattice to the cell membrane. May be an extracellular anchor for integrin receptors in body wall muscles and myoepithelial sheath cells. During the formation of neuromuscular junctions at the larval stage, negatively regulates membrane protrusion from body wall muscles, probably downstream of the integrin complex formed by pat-2 and pat-3. Involved in ovulation. Required for normal lifespan. The protein is Basement membrane proteoglycan of Caenorhabditis elegans.